Here is a 243-residue protein sequence, read N- to C-terminus: CRISPR-associated endoribonuclease Cas6 (243 aa).

The protein belongs to the CRISPR-associated endoribonuclease Cas6 family. In terms of assembly, part of the Csm effector complex that includes at least Cas10(1), Csm2(3), Csm3(5), Csm4(1); the presence of Csm5 and Cas6 may depend on the processing state of precursor crRNA. Csm with a precursor crRNA does not include Csm5, while Cas6, the enzyme probably involved in pre-crRNA processing, is found associated with a subset of the Csm complex that is probably in the process of pre-crRNA maturation. The Csm complex is elongated and slightly twisted with a maximal length of 215 Angstroms and a diameter of 75-80 Angstroms. It has been modeled to have a central protein filamant of Csm3 subunits along which the dsRNA helix of paired crRNA and target RNA binds. The filament is capped at one end by Cas10 and Csm4 and at the other end by Csm5; ssDNA is thought to bind to the N-terminal HD domain of Cas10.

Its function is as follows. CRISPR (clustered regularly interspaced short palindromic repeat) is an adaptive immune system that provides protection against mobile genetic elements (viruses, transposable elements and conjugative plasmids). CRISPR clusters contain spacers, sequences complementary to antecedent mobile elements, and target invading nucleic acids. CRISPR clusters are transcribed and processed into CRISPR RNA (crRNA). The type III-A Csm effector complex binds crRNA and acts as a crRNA-guided RNase, DNase and cyclic oligoadenylate synthase; binding of target RNA cognate to the crRNA is required for all activities. In a heterologous host this Csm effector complex restricts ssRNA phage MS2, suggesting it may target RNA viruses in vivo. Csm functions as a non-specific ssDNase. Base-pairing between crRNA and target RNA to form a ternary Csm complex activates a ssDNase activity; target RNA cleavage suppresses the ssDNase, a temporal control that prevents uncontrolled DNA degradation. Viral RNA transcripts probably tether the Csm complex to the viral genome, recruiting Cas10 ssDNA activity which is able to degrade DNA in the transcription bubble, spatially controlling the DNase activity. In terms of biological role, this protein processes pre-crRNA into individual crRNA units. The protein is CRISPR-associated endoribonuclease Cas6 of Streptococcus thermophilus.